The sequence spans 909 residues: E3 ubiquitin-protein ligase HACE1 (909 aa).

The segment at 1 to 21 is N-terminal helix important for homodimerization; sequence MERAMEQLNRLTRSLRRARTV. 7 ANK repeats span residues 23 to 55, 64 to 93, 97 to 126, 130 to 159, 163 to 192, 196 to 226, and 228 to 253; these read LPED…NSKF, VKRS…NPNY, SGCT…DVNI, EGLT…DVDV, MGQT…DINR, SGAT…YLPD, and NGVT…QYHP. Positions 398-433 are disordered; that stretch reads QDQDAASIPPFEPPGPGSYENLSTGTRESKPDALAG. Positions 574–909 constitute an HECT domain; the sequence is NCAKLKQGIA…HCGSYGYTMA (336 aa). The Glycyl thioester intermediate role is filled by C876.

Homodimer. The homodimer is autoinhibited and stabilized by its N-terminal helix. Interacts with RAB1 (RAB1A, RAB1B or RAB1C), RAB4 (RAB4A or RAB4B) and RAB11 (RAB11A or RAB11B); in a GTP-dependent manner. Interacts with the 26S proteasomal complex through the 20S core proteasomal subunit. Interacts with RARB. Autoubiquitinated. Expressed in multiple tissues including heart, brain and kidney.

It localises to the golgi apparatus. The protein localises to the golgi stack membrane. It is found in the cytoplasm. The protein resides in the endoplasmic reticulum. It carries out the reaction S-ubiquitinyl-[E2 ubiquitin-conjugating enzyme]-L-cysteine + [acceptor protein]-L-lysine = [E2 ubiquitin-conjugating enzyme]-L-cysteine + N(6)-ubiquitinyl-[acceptor protein]-L-lysine.. It participates in protein modification; protein ubiquitination. Its activity is regulated as follows. Sterically autoinhibited in its dimeric state. Functionally, E3 ubiquitin-protein ligase involved in Golgi membrane fusion and regulation of small GTPases. Acts as a regulator of Golgi membrane dynamics during the cell cycle: recruited to Golgi membrane by Rab proteins and regulates postmitotic Golgi membrane fusion. Acts by mediating ubiquitination during mitotic Golgi disassembly, ubiquitination serving as a signal for Golgi reassembly later, after cell division. Specifically binds GTP-bound RAC1, mediating ubiquitination and subsequent degradation of active RAC1, thereby playing a role in host defense against pathogens. May also act as a transcription regulator via its interaction with RARB. In Homo sapiens (Human), this protein is E3 ubiquitin-protein ligase HACE1 (HACE1).